Consider the following 245-residue polypeptide: Nucleoprotein (245 aa).

Residues tyrosine 30, lysine 67, arginine 106, arginine 186, and serine 196 each coordinate RNA.

The protein belongs to the phlebovirus nucleocapsid protein family. Homodimer. Homohexamer; ring-shaped, necessary to form the nucleocapsid. Homopentamers; opened pentamers in solution. Binds to viral genomic RNA. Interacts with glycoprotein Gn; this interaction allows packaging of nucleocapsids into virions.

It is found in the virion. The protein localises to the host cytoplasm. It localises to the host nucleus. Its subcellular location is the host endoplasmic reticulum-Golgi intermediate compartment. The protein resides in the host Golgi apparatus. In terms of biological role, encapsidates the genomic RNA, protecting it from nucleases. Displays high affinity for single-stranded nucleic acid. The encapsidated genomic RNA is termed the nucleocapsid (NC) or ribonucleoprotein. The ribonucleoprotein has a non-helical structure. Serves as template for viral transcription and replication. After replication, the nucleocapsid is recruited to the host Golgi apparatus by glycoprotein Gn for packaging into virus particles. This chain is Nucleoprotein (NP), found in Dabie bandavirus (Severe fever with thrombocytopenia virus).